A 359-amino-acid chain; its full sequence is Mitochondrial glutathione transporter SLC25A39 (359 aa).

Topologically, residues 1–18 (MGDRPAVRISAAITPVQQ) are mitochondrial intermembrane. Solcar repeat units follow at residues 13–149 (ITPV…LRDF), 157–241 (HGDH…VKAQ), and 251–346 (ASFT…GKTF). A helical transmembrane segment spans residues 19-39 (MLASGTGAVLTSLFVTPLDVV). Topologically, residues 40-119 (KIRLQAQQTP…VKITHNEGLR (80 aa)) are mitochondrial matrix. Positions 72, 76, 86, and 92 each coordinate [2Fe-2S] cluster. A helical membrane pass occupies residues 120–140 (SLWSGLPPTLVMAVPATVIYF). Over 141–162 (TCYDQLRDFLCYSMGYHGDHIP) the chain is Mitochondrial intermembrane. Residues 163-183 (LIAGGLARLGAVSVISPLELV) traverse the membrane as a helical segment. Residues 184 to 212 (RTKMQSRRLQYSELMVCIRSSVAQDGWLS) are Mitochondrial matrix-facing. The helical transmembrane segment at 213 to 233 (LWRGWGPTVLRDVPFSALYWF) threads the bilayer. Residues 234 to 253 (NYELVKAQLCEHYRTPQASF) lie on the Mitochondrial intermembrane side of the membrane. The chain crosses the membrane as a helical span at residues 254–274 (TISFTAGAVSGAIAAVLTLPF). Over 275–316 (DVVKTRRQIQLGEMEALGAVSMKKPSSTWNMMRNIWIDMGYK) the chain is Mitochondrial matrix. The chain crosses the membrane as a helical span at residues 317 to 337 (GLFAGFLPRVIKVAPACAVMI). At 338–359 (STYEFGKTFFQERNLHQARCGL) the chain is on the mitochondrial intermembrane side.

The protein belongs to the mitochondrial carrier (TC 2.A.29) family. Post-translationally, cleaved and degraded by AFG3L2; degradation by AFG3L2 is regulated by the ability of SLC25A39 to bind iron-sulfur. In absence of mitochondrial glutathione, SLC25A39 binds iron-sulfur, preventing cleavage and degradation by AFG3L2. The presence of mitochondrial glutathione prevents iron-sulfur-binding to SLC25A39, promoting cleavage and degradation by AFG3L2.

It localises to the mitochondrion inner membrane. The enzyme catalyses glutathione(in) = glutathione(out). Its activity is regulated as follows. The activity of SLC25A39 is regulated by levels of mitochondrial glutathione via its ability to bind [2Fe-2S] iron-sulfur cluster. Upon physiological levels of mitochondrial glutathione, glutathione prevents iron-sulfur-binding to SLC25A39 promoting cleavage and degradation by AFG3L2. Upon depletion of mitochondrial glutathione, SLC25A39 binds iron-sulfur, preventing cleavage and degradation by AFG3L2. Functionally, mitochondrial transporter required for glutathione import into mitochondria. Glutathione, which plays key roles in oxidative metabolism, is produced exclusively in the cytosol and is imported in many organelles. Mitochondrial glutathione is required for the activity and stability of proteins containing iron-sulfur clusters, as well as erythropoiesis. Involved in the early steps of heme biosynthesis. The protein is Mitochondrial glutathione transporter SLC25A39 (slc25a39) of Danio rerio (Zebrafish).